The sequence spans 151 residues: D-aminoacyl-tRNA deacylase (151 aa).

A Gly-cisPro motif, important for rejection of L-amino acids motif is present at residues G136–P137.

The protein belongs to the DTD family. Homodimer.

Its subcellular location is the cytoplasm. It catalyses the reaction glycyl-tRNA(Ala) + H2O = tRNA(Ala) + glycine + H(+). The catalysed reaction is a D-aminoacyl-tRNA + H2O = a tRNA + a D-alpha-amino acid + H(+). Functionally, an aminoacyl-tRNA editing enzyme that deacylates mischarged D-aminoacyl-tRNAs. Also deacylates mischarged glycyl-tRNA(Ala), protecting cells against glycine mischarging by AlaRS. Acts via tRNA-based rather than protein-based catalysis; rejects L-amino acids rather than detecting D-amino acids in the active site. By recycling D-aminoacyl-tRNA to D-amino acids and free tRNA molecules, this enzyme counteracts the toxicity associated with the formation of D-aminoacyl-tRNA entities in vivo and helps enforce protein L-homochirality. The sequence is that of D-aminoacyl-tRNA deacylase from Streptococcus gordonii (strain Challis / ATCC 35105 / BCRC 15272 / CH1 / DL1 / V288).